A 319-amino-acid chain; its full sequence is Olfactory receptor 10Q1 (319 aa).

Over 1 to 29 (MPVGKLVFNQSEPTEFVFRAFTTATEFQV) the chain is Extracellular. The N-linked (GlcNAc...) asparagine glycan is linked to Asn9. The chain crosses the membrane as a helical span at residues 30–50 (LLFLLFLLLYLMILCGNTAII). Over 51-58 (WVVCTHST) the chain is Cytoplasmic. The chain crosses the membrane as a helical span at residues 59–79 (LRTPMYFFLSNLSFLELCYTT). The Extracellular portion of the chain corresponds to 80 to 103 (VVVPLMLSNILGAQKPISLAGCGA). Residues Cys101 and Cys194 are joined by a disulfide bond. Residues 104–124 (QMFFFVTLGSTDCFLLAIMAY) traverse the membrane as a helical segment. Topologically, residues 125–143 (DRYVAICHPLHYTLIMTRE) are cytoplasmic. A helical transmembrane segment spans residues 144–164 (LCTQMLGGALGLALFPSLQLT). Topologically, residues 165–202 (ALIFTLPFCGHHQEINHFLCDVPPVLRLACADIRVHQA) are extracellular. Residues 203–222 (VLYVVSILVLTIPFLLICVS) traverse the membrane as a helical segment. Residues 223–242 (YVFITCAILSIRSAEGRRRA) lie on the Cytoplasmic side of the membrane. A helical membrane pass occupies residues 243–263 (FSTCSFHLTVVLLQYGCCSLV). Residues 264–276 (YLRPRSSTSEDED) lie on the Extracellular side of the membrane. Residues 277–297 (SQIALVYTFVTPLLNPLLYSL) traverse the membrane as a helical segment. At 298–319 (RNKDVKGALRSAIIRKAASDAN) the chain is on the cytoplasmic side.

Belongs to the G-protein coupled receptor 1 family.

Its subcellular location is the cell membrane. Functionally, odorant receptor. The chain is Olfactory receptor 10Q1 (OR10Q1) from Homo sapiens (Human).